The following is a 427-amino-acid chain: Enolase (427 aa).

Position 163 (Gln-163) interacts with (2R)-2-phosphoglycerate. Catalysis depends on Glu-205, which acts as the Proton donor. Mg(2+) contacts are provided by Asp-242, Glu-283, and Asp-310. The (2R)-2-phosphoglycerate site is built by Lys-335, Arg-364, Ser-365, and Lys-386. The active-site Proton acceptor is the Lys-335.

Belongs to the enolase family. The cofactor is Mg(2+).

It is found in the cytoplasm. The protein resides in the secreted. It localises to the cell surface. It catalyses the reaction (2R)-2-phosphoglycerate = phosphoenolpyruvate + H2O. It functions in the pathway carbohydrate degradation; glycolysis; pyruvate from D-glyceraldehyde 3-phosphate: step 4/5. In terms of biological role, catalyzes the reversible conversion of 2-phosphoglycerate (2-PG) into phosphoenolpyruvate (PEP). It is essential for the degradation of carbohydrates via glycolysis. In Salinispora arenicola (strain CNS-205), this protein is Enolase.